A 307-amino-acid polypeptide reads, in one-letter code: Ribonuclease Z (307 aa).

Zn(2+) is bound by residues H61, H63, D65, H66, H138, D208, and H264. D65 functions as the Proton acceptor in the catalytic mechanism.

This sequence belongs to the RNase Z family. Homodimer. It depends on Zn(2+) as a cofactor.

It carries out the reaction Endonucleolytic cleavage of RNA, removing extra 3' nucleotides from tRNA precursor, generating 3' termini of tRNAs. A 3'-hydroxy group is left at the tRNA terminus and a 5'-phosphoryl group is left at the trailer molecule.. Zinc phosphodiesterase, which displays some tRNA 3'-processing endonuclease activity. Probably involved in tRNA maturation, by removing a 3'-trailer from precursor tRNA. Also shows activity toward a broad range of substrates, such as intron containing pre-tRNAs, 5' extended precursors and non-RNA substrates. This Pyrococcus furiosus (strain ATCC 43587 / DSM 3638 / JCM 8422 / Vc1) protein is Ribonuclease Z.